Reading from the N-terminus, the 597-residue chain is Elongation factor 4 (597 aa).

The 183-residue stretch at 2–184 folds into the tr-type G domain; sequence KHIRNFSIIA…NIVSAIPAPE (183 aa). Residues 14–19 and 131–134 each bind GTP; these read DHGKST and NKID.

The protein belongs to the TRAFAC class translation factor GTPase superfamily. Classic translation factor GTPase family. LepA subfamily.

Its subcellular location is the cell inner membrane. The enzyme catalyses GTP + H2O = GDP + phosphate + H(+). Its function is as follows. Required for accurate and efficient protein synthesis under certain stress conditions. May act as a fidelity factor of the translation reaction, by catalyzing a one-codon backward translocation of tRNAs on improperly translocated ribosomes. Back-translocation proceeds from a post-translocation (POST) complex to a pre-translocation (PRE) complex, thus giving elongation factor G a second chance to translocate the tRNAs correctly. Binds to ribosomes in a GTP-dependent manner. The polypeptide is Elongation factor 4 (Vibrio parahaemolyticus serotype O3:K6 (strain RIMD 2210633)).